The following is a 211-amino-acid chain: 3,4-dihydroxy-2-butanone 4-phosphate synthase (211 aa).

Residues 37 to 38 (RE), Asp42, 150 to 154 (RIGHT), and Glu174 each bind D-ribulose 5-phosphate. Position 38 (Glu38) interacts with Mg(2+). His153 contributes to the Mg(2+) binding site.

Belongs to the DHBP synthase family. As to quaternary structure, homodimer. Mg(2+) serves as cofactor. The cofactor is Mn(2+).

The catalysed reaction is D-ribulose 5-phosphate = (2S)-2-hydroxy-3-oxobutyl phosphate + formate + H(+). It functions in the pathway cofactor biosynthesis; riboflavin biosynthesis; 2-hydroxy-3-oxobutyl phosphate from D-ribulose 5-phosphate: step 1/1. Catalyzes the conversion of D-ribulose 5-phosphate to formate and 3,4-dihydroxy-2-butanone 4-phosphate. The chain is 3,4-dihydroxy-2-butanone 4-phosphate synthase from Buchnera aphidicola subsp. Baizongia pistaciae (strain Bp).